Here is a 617-residue protein sequence, read N- to C-terminus: Chaperone protein HscA homolog (617 aa).

Belongs to the heat shock protein 70 family.

Functionally, chaperone involved in the maturation of iron-sulfur cluster-containing proteins. Has a low intrinsic ATPase activity which is markedly stimulated by HscB. This Actinobacillus pleuropneumoniae serotype 5b (strain L20) protein is Chaperone protein HscA homolog.